The primary structure comprises 439 residues: Serine hydroxymethyltransferase (439 aa).

(6S)-5,6,7,8-tetrahydrofolate is bound at residue Ala126–Val128. Position 232 is an N6-(pyridoxal phosphate)lysine (Lys232).

Belongs to the SHMT family. In terms of assembly, homodimer. The cofactor is pyridoxal 5'-phosphate.

The protein resides in the cytoplasm. Its pathway is amino-acid biosynthesis; glycine biosynthesis; glycine from L-serine: step 1/1. In terms of biological role, catalyzes the reversible interconversion of serine and glycine with a modified folate serving as the one-carbon carrier. Also exhibits a pteridine-independent aldolase activity toward beta-hydroxyamino acids, producing glycine and aldehydes, via a retro-aldol mechanism. The polypeptide is Serine hydroxymethyltransferase (Staphylothermus marinus (strain ATCC 43588 / DSM 3639 / JCM 9404 / F1)).